A 1235-amino-acid chain; its full sequence is Topoisomerase 1-associated factor 1 (1235 aa).

4 disordered regions span residues 327–357 (RERK…GPPV), 584–610 (GEEA…HAER), 812–841 (EGAA…TEAR), and 897–1235 (EFSP…SDEE). Residues 585-603 (EEAEDVGVPEDNDADDSGD) are compositionally biased toward acidic residues. Residues 929 to 947 (DDDEEEIRGFLGDDDDEDF) show a composition bias toward acidic residues. A compositionally biased stretch (basic residues) spans 964-973 (QKKRQRKRRR). Residues 977–986 (SGDEEDEGVS) are compositionally biased toward acidic residues. Basic and acidic residues predominate over residues 999 to 1044 (EKELEKIRKIKSEMYVHASDDETDDERDREFFERERKRQETKDSKF). Acidic residues-rich tracts occupy residues 1070–1081 (VLDDEPESDESE) and 1099–1118 (SEEE…SDEE). Basic residues predominate over residues 1124–1150 (AKSKTSKRKAAVPSKRPARRPGTAKKR). A compositionally biased stretch (acidic residues) spans 1156–1170 (SDNDEDEDEEEDAMD). Residues 1193 to 1202 (LGRRIDKMAM) are compositionally biased toward basic and acidic residues. Positions 1203–1212 (DDGDEDEDDQ) are enriched in acidic residues.

This sequence belongs to the timeless family. Component of the fork protection complex (FPC) consisting of tof-1 and csm-3.

It is found in the nucleus. Its function is as follows. Forms a fork protection complex (FPC) with csm-3 and which is required for chromosome segregation during meiosis and DNA damage repair. FPC coordinates leading and lagging strand synthesis and moves with the replication fork. FPC stabilizes replication forks in a configuration that is recognized by replication checkpoint sensors. This is Topoisomerase 1-associated factor 1 (tof-1) from Neurospora crassa (strain ATCC 24698 / 74-OR23-1A / CBS 708.71 / DSM 1257 / FGSC 987).